We begin with the raw amino-acid sequence, 366 residues long: tRNA-specific 2-thiouridylase MnmA (366 aa).

ATP-binding positions include glycine 10 to serine 17 and isoleucine 36. Cysteine 98 (nucleophile) is an active-site residue. A disulfide bridge links cysteine 98 with cysteine 194. Residue glycine 122 coordinates ATP. The interaction with tRNA stretch occupies residues lysine 144 to glutamine 146. Catalysis depends on cysteine 194, which acts as the Cysteine persulfide intermediate. The tract at residues arginine 303–tyrosine 304 is interaction with tRNA.

It belongs to the MnmA/TRMU family.

Its subcellular location is the cytoplasm. It carries out the reaction S-sulfanyl-L-cysteinyl-[protein] + uridine(34) in tRNA + AH2 + ATP = 2-thiouridine(34) in tRNA + L-cysteinyl-[protein] + A + AMP + diphosphate + H(+). Functionally, catalyzes the 2-thiolation of uridine at the wobble position (U34) of tRNA, leading to the formation of s(2)U34. The protein is tRNA-specific 2-thiouridylase MnmA of Chlorobaculum tepidum (strain ATCC 49652 / DSM 12025 / NBRC 103806 / TLS) (Chlorobium tepidum).